A 570-amino-acid chain; its full sequence is Eukaryotic translation initiation factor 2A (570 aa).

WD repeat units lie at residues Glu-274 to Ile-316 and Gly-318 to Ser-358. Residues Pro-468–Gln-526 are disordered. A compositionally biased stretch (low complexity) spans Gly-482–Gly-492. Over residues Asn-493–Ser-518 the composition is skewed to polar residues. A coiled-coil region spans residues Glu-519–Val-541.

The protein belongs to the WD repeat EIF2A family.

Functions in the early steps of protein synthesis of a small number of specific mRNAs. Acts by directing the binding of methionyl-tRNAi to 40S ribosomal subunits. In contrast to the eIF-2 complex, it binds methionyl-tRNAi to 40S subunits in a codon-dependent manner, whereas the eIF-2 complex binds methionyl-tRNAi to 40S subunits in a GTP-dependent manner. This Caenorhabditis elegans protein is Eukaryotic translation initiation factor 2A.